A 203-amino-acid polypeptide reads, in one-letter code: NADH dehydrogenase [ubiquinone] 1 alpha subcomplex assembly factor 4 (203 aa).

The protein belongs to the NDUFAF4 family. In terms of assembly, together with NdufAF3 associates with mitochondrial complex I assembly intermediates during its biogenesis.

In terms of biological role, involved in the assembly of mitochondrial NADH:ubiquinone oxidoreductase complex (complex I). Together with NdufAF3, involved in biogenesis of complex 1 modules N, Q and P-peripheral, but not the P-distal module. Required for recruitment of the complex I assembly factor Timmdc1 to complex 1 assembly intermediates. This is NADH dehydrogenase [ubiquinone] 1 alpha subcomplex assembly factor 4 from Drosophila melanogaster (Fruit fly).